The primary structure comprises 303 residues: Glycine betaine/carnitine/choline-binding protein OpuCC (303 aa).

The first 20 residues, 1–20, serve as a signal peptide directing secretion; that stretch reads MTKIKWLGAFALVFVMLLGG. Cysteine 21 carries the N-palmitoyl cysteine lipid modification. The S-diacylglycerol cysteine moiety is linked to residue cysteine 21.

It belongs to the OsmX family. In terms of assembly, the complex is composed of two ATP-binding proteins (OpuCA), two transmembrane proteins (OpuCB and OpuCD) and a solute-binding protein (OpuCC).

Its subcellular location is the cell membrane. In terms of biological role, member of a high affinity multicomponent binding-protein-dependent transport system for glycine betaine, carnitine, and choline. The protein is Glycine betaine/carnitine/choline-binding protein OpuCC (opuCC) of Bacillus subtilis (strain 168).